The sequence spans 874 residues: Leucine--tRNA ligase (874 aa).

Residues 47-57 carry the 'HIGH' region motif; the sequence is PYPSGKLHMGH. Residues 636-640 carry the 'KMSKS' region motif; sequence KMSKS. Residue Lys-639 participates in ATP binding.

The protein belongs to the class-I aminoacyl-tRNA synthetase family.

It is found in the cytoplasm. The enzyme catalyses tRNA(Leu) + L-leucine + ATP = L-leucyl-tRNA(Leu) + AMP + diphosphate. This Acinetobacter baumannii (strain AB0057) protein is Leucine--tRNA ligase.